We begin with the raw amino-acid sequence, 372 residues long: BTB/POZ and TAZ domain-containing protein 4 (372 aa).

The segment at 14–37 (SADSSSVPIPPPLPSKSDGLKKKL) is disordered. A BTB domain is found at 60-128 (ADVVIYTDNG…LYSSCYEKEE (69 aa)). The TAZ-type zinc-finger motif lies at 238–330 (RIYSQLYEAM…SDQCRVPLCR (93 aa)). A caM-binding region spans residues 341–364 (KKDESRWKLLVKNVLGSKKIGGSP).

As to quaternary structure, interacts with GTE11/BET10 through the BTB domain. Preferentially expressed in leaves, stems and flowers.

It localises to the cytoplasm. It functions in the pathway protein modification; protein ubiquitination. May act as a substrate-specific adapter of an E3 ubiquitin-protein ligase complex (CUL3-RBX1-BTB) which mediates the ubiquitination and subsequent proteasomal degradation of target proteins. This chain is BTB/POZ and TAZ domain-containing protein 4 (BT4), found in Arabidopsis thaliana (Mouse-ear cress).